The sequence spans 173 residues: uncharacterized protein (173 aa).

Disordered stretches follow at residues 1–23 and 48–173; these read MGDLPWAPPEAQAPSTAGAGDVA and TGAA…APQR. Low complexity predominate over residues 49 to 60; that stretch reads GAAPGSAQAGPP. A compositionally biased stretch (pro residues) spans 70–83; it reads PRGPQAPPRLPPSL. Residues 123–136 show a composition bias toward low complexity; that stretch reads PACAGSSAPGSPAA.

This is an uncharacterized protein from Homo sapiens (Human).